The primary structure comprises 815 residues: Patatin-like phospholipase domain-containing protein LELG_00944 (815 aa).

A compositionally biased stretch (polar residues) spans 41–50; the sequence is VSTTAPTTPL. 2 disordered regions span residues 41–105 and 140–166; these read VSTT…PQLK and SENL…STSP. Positions 54-73 are enriched in low complexity; sequence LDMGDLSLLGGELGNGSDDV. Positions 74–94 are enriched in acidic residues; sequence VVGDDDDDDDDDDDDDDDDDD. Residues 148 to 160 show a composition bias toward basic residues; it reads KRTKFAKSSKSSK. Residues 185–205 traverse the membrane as a helical segment; the sequence is WPILTFVVIWVTILGFLYLAV. The region spanning 360–552 is the PNPLA domain; the sequence is LCLSGGACFA…RTDIPIDALN (193 aa). The short motif at 391–395 is the GXSXG element; it reads GTSGG. Catalysis depends on S393, which acts as the Nucleophile. Residue D539 is the Proton acceptor of the active site. The disordered stretch occupies residues 753–815; that stretch reads GSTLRDDDAD…LTKERRHTVY (63 aa). The segment covering 759 to 799 has biased composition (acidic residues); the sequence is DDADADVDEDDNEDEDEEDEDENDYEEYDVEDLDDPYESDA.

Belongs to the PLPL family.

The protein resides in the membrane. In terms of biological role, probable lipid hydrolase. The polypeptide is Patatin-like phospholipase domain-containing protein LELG_00944 (Lodderomyces elongisporus (strain ATCC 11503 / CBS 2605 / JCM 1781 / NBRC 1676 / NRRL YB-4239) (Yeast)).